Consider the following 132-residue polypeptide: uncharacterized protein (132 aa).

The next 2 membrane-spanning stretches (helical) occupy residues 12–32 (VIGF…KKLY) and 37–57 (LTLA…IPVL).

It is found in the cell membrane. This is an uncharacterized protein from Methanocaldococcus jannaschii (strain ATCC 43067 / DSM 2661 / JAL-1 / JCM 10045 / NBRC 100440) (Methanococcus jannaschii).